The following is a 451-amino-acid chain: Methylenetetrahydrofolate--tRNA-(uracil-5-)-methyltransferase TrmFO (451 aa).

Residue 18–23 (GGGLAG) participates in FAD binding.

This sequence belongs to the MnmG family. TrmFO subfamily. It depends on FAD as a cofactor.

The protein resides in the cytoplasm. It carries out the reaction uridine(54) in tRNA + (6R)-5,10-methylene-5,6,7,8-tetrahydrofolate + NADH + H(+) = 5-methyluridine(54) in tRNA + (6S)-5,6,7,8-tetrahydrofolate + NAD(+). The enzyme catalyses uridine(54) in tRNA + (6R)-5,10-methylene-5,6,7,8-tetrahydrofolate + NADPH + H(+) = 5-methyluridine(54) in tRNA + (6S)-5,6,7,8-tetrahydrofolate + NADP(+). Its function is as follows. Catalyzes the folate-dependent formation of 5-methyl-uridine at position 54 (M-5-U54) in all tRNAs. This chain is Methylenetetrahydrofolate--tRNA-(uracil-5-)-methyltransferase TrmFO, found in Synechococcus sp. (strain JA-3-3Ab) (Cyanobacteria bacterium Yellowstone A-Prime).